Reading from the N-terminus, the 314-residue chain is tRNA dimethylallyltransferase (314 aa).

The segment at 1 to 24 (MAEEPQRSPAPTSPFAFTVPSNPL) is disordered. 40–47 (GPTASGKS) contacts ATP. 42-47 (TASGKS) contributes to the substrate binding site.

Belongs to the IPP transferase family. In terms of assembly, monomer. Mg(2+) serves as cofactor.

The enzyme catalyses adenosine(37) in tRNA + dimethylallyl diphosphate = N(6)-dimethylallyladenosine(37) in tRNA + diphosphate. In terms of biological role, catalyzes the transfer of a dimethylallyl group onto the adenine at position 37 in tRNAs that read codons beginning with uridine, leading to the formation of N6-(dimethylallyl)adenosine (i(6)A). The polypeptide is tRNA dimethylallyltransferase (Cereibacter sphaeroides (strain ATCC 17029 / ATH 2.4.9) (Rhodobacter sphaeroides)).